The sequence spans 326 residues: Probable UDP-3-O-acyl-N-acetylglucosamine deacetylase 2, mitochondrial (326 aa).

The N-terminal 21 residues, Met-1–Tyr-21, are a transit peptide targeting the mitochondrion. Zn(2+) contacts are provided by His-109, His-281, and Asp-285.

Belongs to the LpxC family. It depends on Zn(2+) as a cofactor.

The protein localises to the mitochondrion. It catalyses the reaction a UDP-3-O-[(3R)-3-hydroxyacyl]-N-acetyl-alpha-D-glucosamine + H2O = a UDP-3-O-[(3R)-3-hydroxyacyl]-alpha-D-glucosamine + acetate. Its pathway is glycolipid biosynthesis; lipid IV(A) biosynthesis; lipid IV(A) from (3R)-3-hydroxytetradecanoyl-[acyl-carrier-protein] and UDP-N-acetyl-alpha-D-glucosamine: step 2/6. In terms of biological role, involved in the biosynthesis of lipid A, a phosphorylated glycolipid that in bacteria anchors the lipopolysaccharide to the outer membrane of the cell. Lipid A-like molecules in plants may serve as structural components of the outer membranes of mitochondria and/or chloroplasts, or may be involved in signal transduction or plant defense responses (Potential). This chain is Probable UDP-3-O-acyl-N-acetylglucosamine deacetylase 2, mitochondrial (LPXC2), found in Arabidopsis thaliana (Mouse-ear cress).